The primary structure comprises 907 residues: MDTSRLGVLLSLPVLLQLATGGSSPRSGVLLRGCPTHCHCEPDGRMLLRVDCSDLGLSELPSNLSVFTSYLDLSMNNISQLLPNPLPSLRFLEELRLAGNALTYIPKGAFTGLYSLKVLMLQNNQLRHVPTEALQNLRSLQSLRLDANHISYVPPSCFSGLHSLRHLWLDDNALTEIPVQAFRSLSALQAMTLALNKIHHIPDYAFGNLSSLVVLHLHNNRIHSLGKKCFDGLHSLETLDLNYNNLDEFPTAIRTLSNLKELGFHSNNIRSIPEKAFVGNPSLITIHFYDNPIQFVGRSAFQHLPELRTLTLNGASQITEFPDLTGTANLESLTLTGAQISSLPQTVCNQLPNLQVLDLSYNLLEDLPSFSVCQKLQKIDLRHNEIYEIKVDTFQQLLSLRSLNLAWNKIAIIHPNAFSTLPSLIKLDLSSNLLSSFPITGLHGLTHLKLTGNHALQSLISSENFPELKVIEMPYAYQCCAFGVCENAYKISNQWNKGDNSSMDDLHKKDAGMFQAQDERDLEDFLLDFEEDLKALHSVQCSPSPGPFKPCEHLLDGWLIRIGVWTIAVLALTCNALVTSTVFRSPLYISPIKLLIGVIAAVNMLTGVSSAVLAGVDAFTFGSFARHGAWWENGVGCHVIGFLSIFASESSVFLLTLAALERGFSVKYSAKFETKAPFSSLKVIILLCALLALTMAAVPLLGGSKYGASPLCLPLPFGEPSTMGYMVALILLNSLCFLMMTIAYTKLYCNLDKGDLENIWDCSMVKHIALLLFTNCILNCPVAFLSFSSLINLTFISPEVIKFILLVVVPLPACLNPLLYILFNPHFKEDLVSLRKQTYVWTRSKHPSLMSINSDDVEKQSCDSTQALVTFTSSSITYDLPPSSVPSPAYPVTESCHLSSVAFVPCL.

Positions 1 to 21 (MDTSRLGVLLSLPVLLQLATG) are cleaved as a signal peptide. Topologically, residues 22-561 (GSSPRSGVLL…EHLLDGWLIR (540 aa)) are extracellular. Residues 25–66 (PRSGVLLRGCPTHCHCEPDGRMLLRVDCSDLGLSELPSNLSV) form the LRRNT domain. 2 disulfide bridges follow: C34-C40 and C38-C52. N-linked (GlcNAc...) asparagine glycosylation is found at N63 and N77. 16 LRR repeats span residues 67–90 (FTSYLDLSMNNISQLLPNPLPSLR), 91–112 (FLEELRLAGNALTYIPKGAFTG), 115–136 (SLKVLMLQNNQLRHVPTEALQN), 139–160 (SLQSLRLDANHISYVPPSCFSG), 163–184 (SLRHLWLDDNALTEIPVQAFRS), 187–208 (ALQAMTLALNKIHHIPDYAFGN), 211–232 (SLVVLHLHNNRIHSLGKKCFDG), 235–256 (SLETLDLNYNNLDEFPTAIRTL), 258–279 (NLKELGFHSNNIRSIPEKAFVG), 282–303 (SLITIHFYDNPIQFVGRSAFQH), 306–328 (ELRTLTLNGASQITEFPDLTGTA), 329–350 (NLESLTLTGAQISSLPQTVCNQ), 353–374 (NLQVLDLSYNLLEDLPSFSVCQ), 375–396 (KLQKIDLRHNEIYEIKVDTFQQ), 399–420 (SLRSLNLAWNKIAIIHPNAFST), and 423–446 (SLIKLDLSSNLLSSFPITGLHGLT). N-linked (GlcNAc...) asparagine glycosylation occurs at N208. A disulfide bridge links C348 with C373. The cysteines at positions 479 and 541 are disulfide-linked. N-linked (GlcNAc...) asparagine glycosylation is present at N500. A helical membrane pass occupies residues 562–582 (IGVWTIAVLALTCNALVTSTV). The Cytoplasmic portion of the chain corresponds to 583-593 (FRSPLYISPIK). A helical transmembrane segment spans residues 594 to 614 (LLIGVIAAVNMLTGVSSAVLA). Topologically, residues 615 to 638 (GVDAFTFGSFARHGAWWENGVGCH) are extracellular. C637 and C712 are oxidised to a cystine. Residues 639–659 (VIGFLSIFASESSVFLLTLAA) form a helical membrane-spanning segment. The Cytoplasmic segment spans residues 660–682 (LERGFSVKYSAKFETKAPFSSLK). A helical transmembrane segment spans residues 683-703 (VIILLCALLALTMAAVPLLGG). Residues 704-722 (SKYGASPLCLPLPFGEPST) lie on the Extracellular side of the membrane. Residues 723–743 (MGYMVALILLNSLCFLMMTIA) traverse the membrane as a helical segment. The Cytoplasmic segment spans residues 744–767 (YTKLYCNLDKGDLENIWDCSMVKH). A helical membrane pass occupies residues 768 to 788 (IALLLFTNCILNCPVAFLSFS). The Extracellular portion of the chain corresponds to 789 to 802 (SLINLTFISPEVIK). N-linked (GlcNAc...) asparagine glycosylation is present at N792. The helical transmembrane segment at 803-823 (FILLVVVPLPACLNPLLYILF) threads the bilayer. The Cytoplasmic portion of the chain corresponds to 824–907 (NPHFKEDLVS…LSSVAFVPCL (84 aa)).

Belongs to the G-protein coupled receptor 1 family. In terms of assembly, identified in a complex composed of RNF43, LGR5 and RSPO1. Also interacts with other R-spondin ligands, including RSPO2, RSPO3 and RSPO4. In terms of tissue distribution, expressed in skeletal muscle, placenta, spinal cord, and various region of brain. Expressed at the base of crypts in colonic and small mucosa stem cells. In premalignant cancer expression is not restricted to the cript base. Overexpressed in cancers of the ovary, colon and liver.

Its subcellular location is the cell membrane. It is found in the golgi apparatus. The protein localises to the trans-Golgi network membrane. In terms of biological role, receptor for R-spondins that potentiates the canonical Wnt signaling pathway and acts as a stem cell marker of the intestinal epithelium and the hair follicle. Upon binding to R-spondins (RSPO1, RSPO2, RSPO3 or RSPO4), associates with phosphorylated LRP6 and frizzled receptors that are activated by extracellular Wnt receptors, triggering the canonical Wnt signaling pathway to increase expression of target genes. In contrast to classical G-protein coupled receptors, does not activate heterotrimeric G-proteins to transduce the signal. Involved in the development and/or maintenance of the adult intestinal stem cells during postembryonic development. The protein is Leucine-rich repeat-containing G-protein coupled receptor 5 (LGR5) of Homo sapiens (Human).